The following is a 520-amino-acid chain: Succinyl-CoA:3-ketoacid coenzyme A transferase 2A, mitochondrial (520 aa).

The transit peptide at 1–39 directs the protein to the mitochondrion; the sequence is MAALRLLAWAFSRRVSAHRPQPTLPHHLIRHYPTTRCGK. A disordered region spans residues 280–299; sequence ERLTTRDSPPAPGSKDQDPK. E342 serves as the catalytic 5-glutamyl coenzyme A thioester intermediate.

The protein belongs to the 3-oxoacid CoA-transferase family. Homodimer. As to expression, expressed in flagella of epididymal sperm.

Its subcellular location is the mitochondrion. It carries out the reaction a 3-oxo acid + succinyl-CoA = a 3-oxoacyl-CoA + succinate. Its pathway is ketone metabolism; succinyl-CoA degradation; acetoacetyl-CoA from succinyl-CoA: step 1/1. In terms of biological role, key enzyme for ketone body catabolism. Transfers the CoA moiety from succinate to acetoacetate. Formation of the enzyme-CoA intermediate proceeds via an unstable anhydride species formed between the carboxylate groups of the enzyme and substrate. Probably play and important roles in the energy metabolism of spermatozoa. This is Succinyl-CoA:3-ketoacid coenzyme A transferase 2A, mitochondrial (Oxct2a) from Rattus norvegicus (Rat).